Reading from the N-terminus, the 972-residue chain is Translation initiation factor IF-2 (972 aa).

A compositionally biased stretch (basic and acidic residues) spans 48 to 63 (DHLRKSHGATDGDKRK). Disordered stretches follow at residues 48–85 (DHLR…KART) and 99–385 (RDDV…QAPT). The span at 105 to 114 (GAEQGQAQVA) shows a compositional bias: low complexity. Positions 121 to 181 (ELKRREEEAR…EEEAAAKRVA (61 aa)) are enriched in basic and acidic residues. Low complexity predominate over residues 182-205 (AEAAAAQQQAAAQQAAAAEQQEAA). The span at 212 to 263 (DEARAAAERAAQREAAKKAEDAAREAADKARAEQEEISKRRAAAEAEARAIR) shows a compositional bias: basic and acidic residues. The span at 279-288 (PPKPVEPPKP) shows a compositional bias: pro residues. A compositionally biased stretch (low complexity) spans 313 to 328 (PAGAAAPATTAPAGAG). Over residues 357–370 (SSGGVDRGWRGGPK) the composition is skewed to gly residues. A tr-type G domain is found at 472 to 641 (PRPPVVTVMG…LLQAEVLELK (170 aa)). The tract at residues 481-488 (GHVDHGKT) is G1. 481-488 (GHVDHGKT) lines the GTP pocket. Residues 506-510 (GITQH) form a G2 region. Positions 527 to 530 (DTPG) are G3. GTP-binding positions include 527 to 531 (DTPGH) and 581 to 584 (NKID). The interval 581–584 (NKID) is G4. The G5 stretch occupies residues 617–619 (SAK).

It belongs to the TRAFAC class translation factor GTPase superfamily. Classic translation factor GTPase family. IF-2 subfamily.

The protein localises to the cytoplasm. Functionally, one of the essential components for the initiation of protein synthesis. Protects formylmethionyl-tRNA from spontaneous hydrolysis and promotes its binding to the 30S ribosomal subunits. Also involved in the hydrolysis of GTP during the formation of the 70S ribosomal complex. The sequence is that of Translation initiation factor IF-2 from Burkholderia lata (strain ATCC 17760 / DSM 23089 / LMG 22485 / NCIMB 9086 / R18194 / 383).